Reading from the N-terminus, the 247-residue chain is ATP synthase subunit a, chloroplastic (247 aa).

5 consecutive transmembrane segments (helical) span residues 38–58 (QVLI…IIAV), 95–115 (VPFI…GALL), 133–153 (DINT…YAGL), 199–219 (LVVV…VMFL), and 220–240 (GLFT…AYIG).

It belongs to the ATPase A chain family. As to quaternary structure, F-type ATPases have 2 components, CF(1) - the catalytic core - and CF(0) - the membrane proton channel. CF(1) has five subunits: alpha(3), beta(3), gamma(1), delta(1), epsilon(1). CF(0) has four main subunits: a, b, b' and c.

The protein resides in the plastid. The protein localises to the chloroplast thylakoid membrane. Functionally, key component of the proton channel; it plays a direct role in the translocation of protons across the membrane. The sequence is that of ATP synthase subunit a, chloroplastic from Phalaenopsis aphrodite subsp. formosana (Moth orchid).